Reading from the N-terminus, the 376-residue chain is CYP enzymes assisting alcohol dehydrogenase (376 aa).

8 residues coordinate Zn(2+): cysteine 43, threonine 45, histidine 64, cysteine 94, cysteine 97, cysteine 100, cysteine 108, and cysteine 173. Residue threonine 45 participates in NAD(+) binding. Positions 45 and 64 each coordinate substrate. NAD(+) is bound by residues 199 to 204, aspartate 223, lysine 228, 294 to 296, phenylalanine 320, and lysine 371; these read GLGAVG and LGA.

It belongs to the zinc-containing alcohol dehydrogenase family. Class-III subfamily. In terms of assembly, homodimer. Requires Zn(2+) as cofactor.

Its pathway is alkaloid biosynthesis. Functionally, may be a positive catalyzer of strictosidine production by assisting secologanin biosynthesis, thus being involved in monoterpene indole alkaloids accumulation. The polypeptide is CYP enzymes assisting alcohol dehydrogenase (Catharanthus roseus (Madagascar periwinkle)).